Here is a 308-residue protein sequence, read N- to C-terminus: MIDRFGRPLEDLRITLTHACNFECFFCHMEGEEGDNYLLSKEDILLVAKVARKFGINSVKLTGGEPTLRRDLVEIVRGLKQLGYEDVSMTTNGFLLKDLAHKLKLAGLDRINISLHAVSRDTFKKITGVDAFDRVIEGIKSAIDVGLVPVKLNFVVNRRNREEAFKFIELSQNLGVNEIHLIELHPVGLGKLAFKEHDDLREIEEYIEKISIKKLIRKKHFRPRYVLPSGLIVEVVKPYANPIFCAGCNRIRLSVDGKLKTCLYREDNVIDVLDILKGEYSEDVKEELLGRAFMIAIAIREPNFKYKI.

The 219-residue stretch at 4-222 (RFGRPLEDLR…KKLIRKKHFR (219 aa)) folds into the Radical SAM core domain. R13 contributes to the GTP binding site. Residues C20, C24, and C27 each coordinate [4Fe-4S] cluster. Residue K60 coordinates GTP. Residue G64 participates in S-adenosyl-L-methionine binding. T90 provides a ligand contact to GTP. S114 is an S-adenosyl-L-methionine binding site. A GTP-binding site is contributed by K151. Positions 245 and 248 each coordinate [4Fe-4S] cluster. 250–252 (RIR) contributes to the GTP binding site. Residue C262 coordinates [4Fe-4S] cluster.

The protein belongs to the radical SAM superfamily. MoaA family. [4Fe-4S] cluster is required as a cofactor.

It catalyses the reaction GTP + AH2 + S-adenosyl-L-methionine = (8S)-3',8-cyclo-7,8-dihydroguanosine 5'-triphosphate + 5'-deoxyadenosine + L-methionine + A + H(+). The protein operates within cofactor biosynthesis; molybdopterin biosynthesis. In terms of biological role, catalyzes the cyclization of GTP to (8S)-3',8-cyclo-7,8-dihydroguanosine 5'-triphosphate. The protein is Probable GTP 3',8-cyclase of Saccharolobus solfataricus (strain ATCC 35092 / DSM 1617 / JCM 11322 / P2) (Sulfolobus solfataricus).